Here is a 313-residue protein sequence, read N- to C-terminus: MTEKQRIVFAGTPEFARITLAELRQGPEAVVGVFTQPDRPAGRGRTLQASPVKQEALAAGIPVFQPESCKTGEALELLRSLAPDLLIVVAYGQILPQAILALPTRGAINVHASLLPAWRGAAPIARAIAAGDKESGVAIMQMEAGLDSGPVLWEERLPIAADDTAASLHDRLARLGGKALRHVLDDLWAERLKPVPQDPALVTYAHKLKKEEALLDWRLPAATLERLVRAFNPSPVAHTLFRDKGLRVWQARVLGAGGDQAPGSISAVEKDGVVVTCGEDRLQLLAVQPAGKGVLSGSDFARGYRPQVGEVLG.

S113–P116 serves as a coordination point for (6S)-5,6,7,8-tetrahydrofolate.

This sequence belongs to the Fmt family.

The catalysed reaction is L-methionyl-tRNA(fMet) + (6R)-10-formyltetrahydrofolate = N-formyl-L-methionyl-tRNA(fMet) + (6S)-5,6,7,8-tetrahydrofolate + H(+). In terms of biological role, attaches a formyl group to the free amino group of methionyl-tRNA(fMet). The formyl group appears to play a dual role in the initiator identity of N-formylmethionyl-tRNA by promoting its recognition by IF2 and preventing the misappropriation of this tRNA by the elongation apparatus. The chain is Methionyl-tRNA formyltransferase from Acidithiobacillus ferrooxidans (strain ATCC 23270 / DSM 14882 / CIP 104768 / NCIMB 8455) (Ferrobacillus ferrooxidans (strain ATCC 23270)).